The chain runs to 611 residues: Glutamine--fructose-6-phosphate aminotransferase [isomerizing] (611 aa).

Catalysis depends on C2, which acts as the Nucleophile; for GATase activity. A Glutamine amidotransferase type-2 domain is found at 2–219; it reads CGIVGAIAER…EGDIAEIRRD (218 aa). SIS domains follow at residues 287–427 and 460–601; these read AAEL…VQKR and VSEL…VDQP. Catalysis depends on K606, which acts as the For Fru-6P isomerization activity.

As to quaternary structure, homodimer.

The protein localises to the cytoplasm. It catalyses the reaction D-fructose 6-phosphate + L-glutamine = D-glucosamine 6-phosphate + L-glutamate. Its function is as follows. Catalyzes the first step in hexosamine metabolism, converting fructose-6P into glucosamine-6P using glutamine as a nitrogen source. This is Glutamine--fructose-6-phosphate aminotransferase [isomerizing] from Pseudomonas aeruginosa (strain ATCC 15692 / DSM 22644 / CIP 104116 / JCM 14847 / LMG 12228 / 1C / PRS 101 / PAO1).